We begin with the raw amino-acid sequence, 38 residues long: Photosystem II reaction center protein L (38 aa).

The helical transmembrane segment at 17–37 threads the bilayer; that stretch reads SLYWGLLLIFVLAILFSSYIF.

Belongs to the PsbL family. PSII is composed of 1 copy each of membrane proteins PsbA, PsbB, PsbC, PsbD, PsbE, PsbF, PsbH, PsbI, PsbJ, PsbK, PsbL, PsbM, PsbT, PsbX, PsbY, PsbZ, Psb30/Ycf12, at least 3 peripheral proteins of the oxygen-evolving complex and a large number of cofactors. It forms dimeric complexes.

The protein localises to the plastid. It is found in the chloroplast thylakoid membrane. One of the components of the core complex of photosystem II (PSII). PSII is a light-driven water:plastoquinone oxidoreductase that uses light energy to abstract electrons from H(2)O, generating O(2) and a proton gradient subsequently used for ATP formation. It consists of a core antenna complex that captures photons, and an electron transfer chain that converts photonic excitation into a charge separation. This subunit is found at the monomer-monomer interface and is required for correct PSII assembly and/or dimerization. This Mesostigma viride (Green alga) protein is Photosystem II reaction center protein L.